A 231-amino-acid polypeptide reads, in one-letter code: GDSL lipase Rv0518 (231 aa).

An N-terminal signal peptide occupies residues 1 to 20 (MSRPGTYVIGLTLLVGLVVG). Ser46 functions as the Nucleophile in the catalytic mechanism. Asp205 serves as the catalytic Proton donor. His208 acts as the Proton acceptor in catalysis.

It belongs to the 'GDSL' lipolytic enzyme family.

The protein localises to the secreted. It localises to the cell wall. The protein resides in the extracellular space. It catalyses the reaction a fatty acid ester + H2O = an aliphatic alcohol + a fatty acid + H(+). The enzyme catalyses decanoate ester + H2O = decanoate + an aliphatic alcohol + H(+). It carries out the reaction an octanoate ester + H2O = an aliphatic alcohol + octanoate + H(+). The catalysed reaction is a dodecanoate ester + H2O = an aliphatic alcohol + dodecanoate + H(+). It catalyses the reaction a tetradecanoate ester + H2O = an aliphatic alcohol + tetradecanoate + H(+). Activity is inhibited by the serine modifier phenylmethylsulfonyl fluoride (PMSF). Functionally, GDSL lipase that catalyzes the hydrolysis of p-nitrophenyl (pNP) esters. pNP-decanoate (C10) is the preferred substrate. It can also use pNP-octanoate (C8), pNP-dodecanoate (C12) and pNP-tetradecanoate (C14). Has lower activity with pNP-butyrate (C4), pNP-palmitate (C16) and pNP-stearate (C18). Does not show phospholipase A1 activity. Might help bacteria to utilize available lipids for its growth as well as provide resistance to various intracellular stresses by cell wall modulation resulting in enhanced intracellular survival. The sequence is that of GDSL lipase Rv0518 from Mycobacterium tuberculosis (strain ATCC 25618 / H37Rv).